Reading from the N-terminus, the 373-residue chain is Mating-type protein A-2 (373 aa).

Positions Met-1–Ala-22 are disordered.

This sequence to P.anserina SMR1.

Its function is as follows. Required, together with mating-type protein A-3, for efficient ascospore formation. The sequence is that of Mating-type protein A-2 (matA-2) from Neurospora crassa (strain ATCC 24698 / 74-OR23-1A / CBS 708.71 / DSM 1257 / FGSC 987).